A 371-amino-acid chain; its full sequence is Queuine tRNA-ribosyltransferase (371 aa).

Asp-90 serves as the catalytic Nucleophile. Catalysis depends on Asp-90, which acts as the Proton acceptor. Substrate contacts are provided by residues 90–94, Ser-91, Asp-144, Gln-189, and Gly-215; that span reads DSGGF. The segment at 246–252 is RNA binding; that stretch reads GVGTPEN. Asp-265 functions as the Nucleophile in the catalytic mechanism. The RNA binding; important for wobble base 34 recognition stretch occupies residues 270-274; it reads TRNAR. Cys-303, Cys-305, Cys-308, and His-334 together coordinate Zn(2+).

The protein belongs to the queuine tRNA-ribosyltransferase family. Homodimer. Within each dimer, one monomer is responsible for RNA recognition and catalysis, while the other monomer binds to the replacement base PreQ1. Requires Zn(2+) as cofactor.

It catalyses the reaction 7-aminomethyl-7-carbaguanine + guanosine(34) in tRNA = 7-aminomethyl-7-carbaguanosine(34) in tRNA + guanine. It functions in the pathway tRNA modification; tRNA-queuosine biosynthesis. In terms of biological role, catalyzes the base-exchange of a guanine (G) residue with the queuine precursor 7-aminomethyl-7-deazaguanine (PreQ1) at position 34 (anticodon wobble position) in tRNAs with GU(N) anticodons (tRNA-Asp, -Asn, -His and -Tyr). Catalysis occurs through a double-displacement mechanism. The nucleophile active site attacks the C1' of nucleotide 34 to detach the guanine base from the RNA, forming a covalent enzyme-RNA intermediate. The proton acceptor active site deprotonates the incoming PreQ1, allowing a nucleophilic attack on the C1' of the ribose to form the product. After dissociation, two additional enzymatic reactions on the tRNA convert PreQ1 to queuine (Q), resulting in the hypermodified nucleoside queuosine (7-(((4,5-cis-dihydroxy-2-cyclopenten-1-yl)amino)methyl)-7-deazaguanosine). The chain is Queuine tRNA-ribosyltransferase from Helicobacter pylori (strain ATCC 700392 / 26695) (Campylobacter pylori).